Consider the following 323-residue polypeptide: L-lactate dehydrogenase (323 aa).

NAD(+) contacts are provided by residues Val16, Asn37, and 81–82 (GA). Substrate-binding positions include Gln84, Arg90, and 122-125 (NPVD). Residues 120–122 (ATN) and Ser145 each bind NAD(+). Substrate is bound at residue 150-153 (DSAR). His177 functions as the Proton acceptor in the catalytic mechanism. Tyr221 is modified (phosphotyrosine). Thr230 is a substrate binding site.

This sequence belongs to the LDH/MDH superfamily. LDH family. In terms of assembly, homotetramer.

The protein localises to the cytoplasm. The catalysed reaction is (S)-lactate + NAD(+) = pyruvate + NADH + H(+). It participates in fermentation; pyruvate fermentation to lactate; (S)-lactate from pyruvate: step 1/1. Catalyzes the conversion of lactate to pyruvate. The protein is L-lactate dehydrogenase of Limosilactobacillus reuteri (Lactobacillus reuteri).